The primary structure comprises 258 residues: UPF0246 protein YaaA (258 aa).

The protein belongs to the UPF0246 family.

The sequence is that of UPF0246 protein YaaA from Escherichia coli O6:K15:H31 (strain 536 / UPEC).